The primary structure comprises 1159 residues: Phosphatidylinositol 3-kinase age-1 (1159 aa).

The segment covering 1–25 has biased composition (polar residues); that stretch reads MSMGRSSSTTFRNRTASHGSRSLGS. The segment at 1–28 is disordered; that stretch reads MSMGRSSSTTFRNRTASHGSRSLGSAET. In terms of domain architecture, PI3K-ABD spans 79-179; that stretch reads SEGVADMIVL…FPMLFLFEPD (101 aa). The region spanning 272–363 is the PI3K-RBD domain; that stretch reads RKSEANEVWE…YRCPGFVVRR (92 aa). A C2 PI3K-type domain is found at 430 to 588; sequence LDSNLMIRPV…VKMPNEAQYK (159 aa). The PIK helical domain occupies 607–793; it reads DYEACIGDPG…SLLMEAYLRG (187 aa). The PI3K/PI4K catalytic domain maps to 858 to 1159; it reads VIEKAIVLGS…NWLFHAMKHY (302 aa). Positions 864 to 870 are G-loop; it reads VLGSAKQ. Residues 1028-1036 are catalytic loop; it reads GIKDRHSDN. Residues 1047–1073 are activation loop; that stretch reads HIDFGHILGHGKTKLGIQRDRQPFILT.

This sequence belongs to the PI3/PI4-kinase family.

The enzyme catalyses a 1,2-diacyl-sn-glycero-3-phospho-(1D-myo-inositol) + ATP = a 1,2-diacyl-sn-glycero-3-phospho-(1D-myo-inositol-3-phosphate) + ADP + H(+). Phosphatidylinositol 3-kinase homolog that regulates longevity and diapause. Promotes cell survival during embryonic development by recruiting akt-1/2 to the plasma membrane through the production of PtdIns(3,4,5)P3. Could function in the development or neuroendocrine signaling of the dauer pathway. Mediates susceptibility to enteropathogenic E.coli infection. May negatively regulate AYI interneuron neurite outgrowth. Plays a role in aversive olfactory learning when an odor is associated with food deprivation. Regulates this process by promoting the nuclear relocalization of egl-4 in AWC olfactory neurons after odor conditioning. This chain is Phosphatidylinositol 3-kinase age-1 (age-1), found in Caenorhabditis briggsae.